A 485-amino-acid polypeptide reads, in one-letter code: tRNA sulfurtransferase (485 aa).

A THUMP domain is found at 61 to 165 (EELIALLQRI…DDKMMLVKAR (105 aa)). Residues 183-184 (LI), Lys265, Gly287, and Gln296 contribute to the ATP site. A disulfide bridge links Cys344 with Cys456. Residues 404 to 483 (LGENEVILDI…FSNVRVFAKN (80 aa)) form the Rhodanese domain. Cys456 acts as the Cysteine persulfide intermediate in catalysis.

This sequence belongs to the ThiI family.

The protein localises to the cytoplasm. It catalyses the reaction [ThiI sulfur-carrier protein]-S-sulfanyl-L-cysteine + a uridine in tRNA + 2 reduced [2Fe-2S]-[ferredoxin] + ATP + H(+) = [ThiI sulfur-carrier protein]-L-cysteine + a 4-thiouridine in tRNA + 2 oxidized [2Fe-2S]-[ferredoxin] + AMP + diphosphate. The catalysed reaction is [ThiS sulfur-carrier protein]-C-terminal Gly-Gly-AMP + S-sulfanyl-L-cysteinyl-[cysteine desulfurase] + AH2 = [ThiS sulfur-carrier protein]-C-terminal-Gly-aminoethanethioate + L-cysteinyl-[cysteine desulfurase] + A + AMP + 2 H(+). Its pathway is cofactor biosynthesis; thiamine diphosphate biosynthesis. Its function is as follows. Catalyzes the ATP-dependent transfer of a sulfur to tRNA to produce 4-thiouridine in position 8 of tRNAs, which functions as a near-UV photosensor. Also catalyzes the transfer of sulfur to the sulfur carrier protein ThiS, forming ThiS-thiocarboxylate. This is a step in the synthesis of thiazole, in the thiamine biosynthesis pathway. The sulfur is donated as persulfide by IscS. The polypeptide is tRNA sulfurtransferase (Haemophilus influenzae (strain PittGG)).